A 207-amino-acid polypeptide reads, in one-letter code: 2,3-bisphosphoglycerate-dependent phosphoglycerate mutase (207 aa).

Residues 9–16 (RHGQSDWN), 22–23 (TG), Arg61, 88–91 (ERDY), Lys99, 115–116 (RR), and 159–160 (GN) each bind substrate. His10 functions as the Tele-phosphohistidine intermediate in the catalytic mechanism. Glu88 (proton donor/acceptor) is an active-site residue.

The protein belongs to the phosphoglycerate mutase family. BPG-dependent PGAM subfamily. In terms of assembly, homodimer.

It catalyses the reaction (2R)-2-phosphoglycerate = (2R)-3-phosphoglycerate. It functions in the pathway carbohydrate degradation; glycolysis; pyruvate from D-glyceraldehyde 3-phosphate: step 3/5. Its function is as follows. Catalyzes the interconversion of 2-phosphoglycerate and 3-phosphoglycerate. In Beijerinckia indica subsp. indica (strain ATCC 9039 / DSM 1715 / NCIMB 8712), this protein is 2,3-bisphosphoglycerate-dependent phosphoglycerate mutase.